We begin with the raw amino-acid sequence, 181 residues long: Nucleoside triphosphate/diphosphate phosphatase (181 aa).

R26 (proton donor) is an active-site residue. Positions 90, 106, 108, 110, 123, and 126 each coordinate Mg(2+).

It belongs to the Ntdp family. Mg(2+) serves as cofactor.

It catalyses the reaction a ribonucleoside 5'-triphosphate + H2O = a ribonucleoside 5'-diphosphate + phosphate + H(+). It carries out the reaction a ribonucleoside 5'-diphosphate + H2O = a ribonucleoside 5'-phosphate + phosphate + H(+). In terms of biological role, has nucleoside phosphatase activity towards nucleoside triphosphates and nucleoside diphosphates. In Staphylococcus carnosus (strain TM300), this protein is Nucleoside triphosphate/diphosphate phosphatase.